Here is a 506-residue protein sequence, read N- to C-terminus: MXECKGYLELXRSXXHDFIYPLIFQEYIYALAHDRGLNRSIFFENAXYDNKSSLLIVKRLITHLIXQMYXQNHFLFYTNNFXPDPFGGYXTGVXSXMIFEGFGVVVEIPFYLRLLSFLEGKERVKSHNLRSLHSIFPFLEXXXXXXXXXXXXXXXXXXXXXXXXXXXXXXXXXXXXXXXIRFFLHEYPNRNSLITPKKYSFSFSKRNKKFFLFLYNFHVYEYESIFVFLRNQSSHLCSISFETFLERILFYKKIELEVFAKHFKAILWVFKDPFLHYVRYRGKFILASKGSSLLMNKWEYYLVNFWKCYFYIWAQPRRIHIKQLSKNSLDFLGYLSNVRLKPSMVRSQMIENSFLIENAGKKLDTLVPITSMIGSLSKAKFCNVLGHPMNKPVWGGLSDSXIMERIRAXIXKSSHYYSXSLKKISLYXIKYILRLPGAKTLARKHKITVRSFLKRLGVGLLEEFFTEEEQVFYLTFPKASSTSRKLYQRRVWYLDIFYINDTPNHE.

This sequence belongs to the intron maturase 2 family. MatK subfamily.

Its subcellular location is the plastid. The protein resides in the chloroplast. Usually encoded in the trnK tRNA gene intron. Probably assists in splicing its own and other chloroplast group II introns. This Andromeda polifolia (Bog rosemary) protein is Maturase K.